The chain runs to 400 residues: NADPH dehydrogenase 2 (400 aa).

T38 and Q115 together coordinate FMN. Substrate is bound by residues H192 and N195. Y197 (proton donor) is an active-site residue. FMN contacts are provided by R244 and R349. The residue at position 353 (S353) is a Phosphoserine. Y376 contributes to the substrate binding site. A Phosphoserine modification is found at S379.

The protein belongs to the NADH:flavin oxidoreductase/NADH oxidase family. Homodimer or heterodimer with OYE3. FMN is required as a cofactor.

It is found in the cytoplasm. The protein resides in the nucleus. The protein localises to the mitochondrion. The enzyme catalyses A + NADPH + H(+) = AH2 + NADP(+). Functionally, flavin-dependent enoate reductase that catalyzes the chemo- and stereoslective hydrogenation of electron-poor alkenes. The enzyme is reduced by NADPH, and oxygen, quinones, and alpha,beta-unsaturated aldehydes and ketones can act as electron acceptors to complete catalytic turnover. The physiological oxidant remains elusive. Has an antioxidant activity, reducing reactive oxygen species (ROS) levels when overexpressed. Formation of OYE2-OYE3 heterodimers contribute to the induction of programmed cell death upon oxidative stress. In Saccharomyces cerevisiae (strain ATCC 204508 / S288c) (Baker's yeast), this protein is NADPH dehydrogenase 2.